A 484-amino-acid polypeptide reads, in one-letter code: Ectonucleoside triphosphate diphosphohydrolase 6 (484 aa).

The Cytoplasmic portion of the chain corresponds to 1–39; it reads MKKGIRYETSRKTSYIFQQPQHGPWQTRMRKISNHGSLR. A helical; Signal-anchor for type II membrane protein membrane pass occupies residues 40–60; the sequence is VAKVAYPLGLCVGVFIYVAYI. The Lumenal portion of the chain corresponds to 61–484; that stretch reads KWHRATATQA…SLNRQKSPAS (424 aa). A glycan (N-linked (GlcNAc...) asparagine) is linked at Asn220. Glu224 functions as the Proton acceptor in the catalytic mechanism. A glycan (N-linked (GlcNAc...) asparagine) is linked at Asn284. 2 cysteine pairs are disulfide-bonded: Cys325–Cys356 and Cys416–Cys430.

Belongs to the GDA1/CD39 NTPase family. As to quaternary structure, monomer. Ca(2+) is required as a cofactor. The cofactor is Mg(2+). Post-translationally, the secreted form may be produced by intracellular processing. In terms of processing, N-glycosylated. In terms of tissue distribution, expressed in most tissues, but predominantly in heart.

It is found in the golgi apparatus membrane. It localises to the secreted. The protein localises to the cell membrane. The catalysed reaction is a ribonucleoside 5'-diphosphate + H2O = a ribonucleoside 5'-phosphate + phosphate + H(+). The enzyme catalyses IDP + H2O = IMP + phosphate + H(+). It catalyses the reaction GDP + H2O = GMP + phosphate + H(+). It carries out the reaction UDP + H2O = UMP + phosphate + H(+). Glycosylation does not appear to be required for enzymatic activity. Its function is as follows. Catalyzes the hydrolysis of nucleoside triphosphates and diphosphates in a calcium- or magnesium-dependent manner. Has a strong preference for nucleoside diphosphates, preferentially hydrolyzes GDP, IDP, and UDP, with slower hydrolysis of CDP, ITP, GTP, CTP, ADP, and UTP and virtually no hydrolysis of ATP. The membrane bound form might support glycosylation reactions in the Golgi apparatus and, when released from cells, might catalyze the hydrolysis of extracellular nucleotides. This chain is Ectonucleoside triphosphate diphosphohydrolase 6 (ENTPD6), found in Homo sapiens (Human).